A 396-amino-acid polypeptide reads, in one-letter code: Phosphopentomutase (396 aa).

The Mn(2+) site is built by Asp-14, Asp-286, His-291, Asp-327, His-328, and His-339.

Belongs to the phosphopentomutase family. Mn(2+) is required as a cofactor.

It localises to the cytoplasm. The catalysed reaction is 2-deoxy-alpha-D-ribose 1-phosphate = 2-deoxy-D-ribose 5-phosphate. It carries out the reaction alpha-D-ribose 1-phosphate = D-ribose 5-phosphate. Its pathway is carbohydrate degradation; 2-deoxy-D-ribose 1-phosphate degradation; D-glyceraldehyde 3-phosphate and acetaldehyde from 2-deoxy-alpha-D-ribose 1-phosphate: step 1/2. In terms of biological role, isomerase that catalyzes the conversion of deoxy-ribose 1-phosphate (dRib-1-P) and ribose 1-phosphate (Rib-1-P) to deoxy-ribose 5-phosphate (dRib-5-P) and ribose 5-phosphate (Rib-5-P), respectively. The sequence is that of Phosphopentomutase from Staphylococcus carnosus (strain TM300).